The primary structure comprises 100 residues: Small ribosomal subunit protein uS14c (100 aa).

The protein belongs to the universal ribosomal protein uS14 family. In terms of assembly, part of the 30S ribosomal subunit.

The protein resides in the plastid. The protein localises to the chloroplast. Functionally, binds 16S rRNA, required for the assembly of 30S particles. The protein is Small ribosomal subunit protein uS14c of Aethionema grandiflorum (Persian stone-cress).